Reading from the N-terminus, the 392-residue chain is Tryptophan 2,3-dioxygenase (392 aa).

Residues phenylalanine 57 to histidine 61 and arginine 128 contribute to the substrate site. Histidine 313 contributes to the heme binding site. Threonine 328 contacts substrate.

This sequence belongs to the tryptophan 2,3-dioxygenase family. Homotetramer. Dimer of dimers. Heme is required as a cofactor.

It carries out the reaction L-tryptophan + O2 = N-formyl-L-kynurenine. Its pathway is amino-acid degradation; L-tryptophan degradation via kynurenine pathway; L-kynurenine from L-tryptophan: step 1/2. It functions in the pathway pigment biosynthesis; ommochrome biosynthesis. Its function is as follows. Heme-dependent dioxygenase that catalyzes the oxidative cleavage of the L-tryptophan (L-Trp) pyrrole ring and converts L-tryptophan to N-formyl-L-kynurenine. Catalyzes the oxidative cleavage of the indole moiety. This Anopheles gambiae (African malaria mosquito) protein is Tryptophan 2,3-dioxygenase.